The chain runs to 162 residues: Nucleotide-binding protein A2cp1_0112 (162 aa).

It belongs to the YajQ family.

Functionally, nucleotide-binding protein. This Anaeromyxobacter dehalogenans (strain 2CP-1 / ATCC BAA-258) protein is Nucleotide-binding protein A2cp1_0112.